The primary structure comprises 585 residues: Putative indole-3-acetic acid-amido synthetase GH3.9 (585 aa).

Belongs to the IAA-amido conjugating enzyme family.

Its function is as follows. Catalyzes the synthesis of indole-3-acetic acid (IAA)-amino acid conjugates, providing a mechanism for the plant to cope with the presence of excess auxin. This chain is Putative indole-3-acetic acid-amido synthetase GH3.9 (GH3.9), found in Arabidopsis thaliana (Mouse-ear cress).